We begin with the raw amino-acid sequence, 234 residues long: R-spondin-4 (234 aa).

A signal peptide spans 1 to 19; that stretch reads MRAPLCLLLLVAHAVDMLA. The N-linked (GlcNAc...) asparagine glycan is linked to N34. 11 disulfide bridges follow: C35–C41, C38–C47, C50–C69, C73–C88, C91–C98, C95–C104, C107–C118, C122–C135, C139–C181, C150–C157, and C190–C196. Residues 85–128 form an FU repeat; it reads VNRCKKCGATCESCFSQDFCIRCKRQFYLYKGKCLPTCPPGTLA. The region spanning 138 to 197 is the TSP type-1 domain; the sequence is ECELGPWGGWSPCTHNGKTCGSAWGLESRVREAGRAGHEEAATCQVLSESRKCPIQRPCP. Residues 190–234 form a disordered region; it reads CPIQRPCPGERSPGQKKGRKDRRPRKDRKLDRRLDVRPRQPGLQP. Residues 203 to 216 are compositionally biased toward basic residues; sequence GQKKGRKDRRPRKD. The span at 217-227 shows a compositional bias: basic and acidic residues; that stretch reads RKLDRRLDVRP.

This sequence belongs to the R-spondin family. In terms of assembly, binds heparin. Interacts with LGR4, LGR5 and LGR6. Post-translationally, tyr-112 may be phosphorylated; however as this position is probably extracellular, the vivo relevance is not proven.

The protein localises to the secreted. In terms of biological role, activator of the canonical Wnt signaling pathway by acting as a ligand for LGR4-6 receptors. Upon binding to LGR4-6 (LGR4, LGR5 or LGR6), LGR4-6 associate with phosphorylated LRP6 and frizzled receptors that are activated by extracellular Wnt receptors, triggering the canonical Wnt signaling pathway to increase expression of target genes. Also regulates the canonical Wnt/beta-catenin-dependent pathway and non-canonical Wnt signaling by acting as an inhibitor of ZNRF3, an important regulator of the Wnt signaling pathway. The polypeptide is R-spondin-4 (RSPO4) (Homo sapiens (Human)).